Reading from the N-terminus, the 400-residue chain is Inosine-5'-monophosphate dehydrogenase (400 aa).

Residues 96–116 (KNESTPDQNLDKESTDGKDTK) show a composition bias toward basic and acidic residues. The tract at residues 96–125 (KNESTPDQNLDKESTDGKDTKSNNNIDAYS) is disordered. NAD(+) is bound by residues Asp163 and 212–214 (GIG). 2 residues coordinate K(+): Gly214 and Gly216. Ser217 lines the IMP pocket. Cys219 provides a ligand contact to K(+). Cys219 (thioimidate intermediate) is an active-site residue. Residues 252 to 254 (DGG), 275 to 276 (GS), and 299 to 303 (YRGMG) each bind IMP. The active-site Proton acceptor is the Arg315. Glu329 is a binding site for IMP. 3 residues coordinate K(+): Glu383, Ser384, and His385.

This sequence belongs to the IMPDH/GMPR family. In terms of assembly, homotetramer. K(+) is required as a cofactor.

The protein localises to the cytoplasm. It carries out the reaction IMP + NAD(+) + H2O = XMP + NADH + H(+). Its pathway is purine metabolism; XMP biosynthesis via de novo pathway; XMP from IMP: step 1/1. With respect to regulation, mycophenolic acid (MPA) is a non-competitive inhibitor that prevents formation of the closed enzyme conformation by binding to the same site as the amobile flap. In contrast, mizoribine monophosphate (MZP) is a competitive inhibitor that induces the closed conformation. MPA is a potent inhibitor of mammalian IMPDHs but a poor inhibitor of the bacterial enzymes. MZP is a more potent inhibitor of bacterial IMPDH. Resistant to mycophenolic acid (MPA) inhibition. Its function is as follows. Catalyzes the conversion of inosine 5'-phosphate (IMP) to xanthosine 5'-phosphate (XMP), the first committed and rate-limiting step in the de novo synthesis of guanine nucleotides, and therefore plays an important role in the regulation of cell growth. The polypeptide is Inosine-5'-monophosphate dehydrogenase (Cryptosporidium parvum).